The chain runs to 264 residues: [LysW]-aminoadipate/[LysW]-glutamate kinase (264 aa).

Substrate-binding positions include 35–36, R62, and N167; that span reads GG.

Belongs to the acetylglutamate kinase family. LysZ subfamily.

It is found in the cytoplasm. It catalyses the reaction [amino-group carrier protein]-C-terminal-N-(1,4-dicarboxybutan-1-yl)-L-glutamine + ATP = [amino-group carrier protein]-C-terminal-N-(1-carboxy-5-phosphooxy-5-oxopentan-1-yl)-L-glutamine + ADP. It carries out the reaction [amino-group carrier protein]-C-terminal-gamma-(L-glutamyl)-L-glutamate + ATP = [amino-group carrier protein]-C-terminal-gamma-(5-phospho-L-glutamyl)-L-glutamate + ADP. The protein operates within amino-acid biosynthesis; L-lysine biosynthesis via AAA pathway; L-lysine from L-alpha-aminoadipate (Thermus route): step 2/5. It functions in the pathway amino-acid biosynthesis; L-arginine biosynthesis. Its function is as follows. Involved in both the arginine and lysine biosynthetic pathways. Phosphorylates the LysW-bound precursors glutamate (for arginine biosynthesis), respectively alpha-aminoadipate (for lysine biosynthesis). The chain is [LysW]-aminoadipate/[LysW]-glutamate kinase from Saccharolobus islandicus (strain L.S.2.15 / Lassen #1) (Sulfolobus islandicus).